Reading from the N-terminus, the 297-residue chain is 4-hydroxy-tetrahydrodipicolinate synthase (297 aa).

T51 contributes to the pyruvate binding site. Y139 functions as the Proton donor/acceptor in the catalytic mechanism. The active-site Schiff-base intermediate with substrate is the K167. V209 is a pyruvate binding site.

Belongs to the DapA family. In terms of assembly, homotetramer; dimer of dimers.

The protein resides in the cytoplasm. It carries out the reaction L-aspartate 4-semialdehyde + pyruvate = (2S,4S)-4-hydroxy-2,3,4,5-tetrahydrodipicolinate + H2O + H(+). Its pathway is amino-acid biosynthesis; L-lysine biosynthesis via DAP pathway; (S)-tetrahydrodipicolinate from L-aspartate: step 3/4. In terms of biological role, catalyzes the condensation of (S)-aspartate-beta-semialdehyde [(S)-ASA] and pyruvate to 4-hydroxy-tetrahydrodipicolinate (HTPA). This Albidiferax ferrireducens (strain ATCC BAA-621 / DSM 15236 / T118) (Rhodoferax ferrireducens) protein is 4-hydroxy-tetrahydrodipicolinate synthase.